A 78-amino-acid chain; its full sequence is Conotoxin ArMKLT2-0313 (78 aa).

Residues 1 to 22 (MKLTCVLIIAVLCLTVCQLITA) form the signal peptide. Positions 23-47 (DYLRDKQKYRSVRLRDGMLNFKGSR) are excised as a propeptide. Q48 is subject to Pyrrolidone carboxylic acid. 3 disulfides stabilise this stretch: C49/C62, C56/C67, and C61/C75.

Belongs to the conotoxin O1 superfamily. Expressed by the venom duct.

The protein resides in the secreted. The sequence is that of Conotoxin ArMKLT2-0313 from Conus arenatus (Sand-dusted cone).